The sequence spans 200 residues: Recombination protein RecR (200 aa).

The segment at 57–72 (CRQCRTLTEDELCPQC) adopts a C4-type zinc-finger fold. Residues 80–175 (TLLCVVEGPM…ITSRIAHGVP (96 aa)) form the Toprim domain.

The protein belongs to the RecR family.

Its function is as follows. May play a role in DNA repair. It seems to be involved in an RecBC-independent recombinational process of DNA repair. It may act with RecF and RecO. The chain is Recombination protein RecR from Pseudomonas fluorescens (strain ATCC BAA-477 / NRRL B-23932 / Pf-5).